A 296-amino-acid polypeptide reads, in one-letter code: Thiamine-monophosphate kinase (296 aa).

Mg(2+) is bound by residues aspartate 32, threonine 46, and aspartate 48. Position 55 (aspartate 55) interacts with substrate. Mg(2+)-binding residues include aspartate 76 and aspartate 121. Residues 120 to 121 and arginine 144 contribute to the ATP site; that span reads GD. Residue aspartate 206 coordinates Mg(2+). Serine 208 provides a ligand contact to ATP. Aspartate 209 serves as a coordination point for Mg(2+). Tyrosine 293 is a binding site for substrate.

This sequence belongs to the thiamine-monophosphate kinase family.

It carries out the reaction thiamine phosphate + ATP = thiamine diphosphate + ADP. Its pathway is cofactor biosynthesis; thiamine diphosphate biosynthesis; thiamine diphosphate from thiamine phosphate: step 1/1. Its function is as follows. Catalyzes the ATP-dependent phosphorylation of thiamine-monophosphate (TMP) to form thiamine-pyrophosphate (TPP), the active form of vitamin B1. The sequence is that of Thiamine-monophosphate kinase from Archaeoglobus fulgidus (strain ATCC 49558 / DSM 4304 / JCM 9628 / NBRC 100126 / VC-16).